We begin with the raw amino-acid sequence, 267 residues long: Undecaprenyl-diphosphatase (267 aa).

8 consecutive transmembrane segments (helical) span residues 1-21 (MSYF…FLPI), 39-59 (QGLA…VIYF), 83-103 (AKLA…GLLM), 111-131 (LRSA…LWWV), 144-164 (TGWK…IPGT), 189-209 (FLMS…KLVT), 218-238 (FLLT…HFFL), and 245-265 (GMTP…AFLL).

It belongs to the UppP family.

The protein localises to the cell inner membrane. It catalyses the reaction di-trans,octa-cis-undecaprenyl diphosphate + H2O = di-trans,octa-cis-undecaprenyl phosphate + phosphate + H(+). Functionally, catalyzes the dephosphorylation of undecaprenyl diphosphate (UPP). Confers resistance to bacitracin. The polypeptide is Undecaprenyl-diphosphatase (Vibrio parahaemolyticus serotype O3:K6 (strain RIMD 2210633)).